The following is a 356-amino-acid chain: 1-deoxy-D-xylulose 5-phosphate reductoisomerase (356 aa).

Positions 7, 8, 9, 10, 31, 33, and 111 each coordinate NADPH. Residue lysine 112 participates in 1-deoxy-D-xylulose 5-phosphate binding. Residue glutamate 113 participates in NADPH binding. Aspartate 131 lines the Mn(2+) pocket. The 1-deoxy-D-xylulose 5-phosphate site is built by serine 132, glutamate 133, serine 155, and histidine 178. Glutamate 133 is a Mn(2+) binding site. NADPH is bound at residue glycine 184. Serine 191, asparagine 196, lysine 197, and glutamate 200 together coordinate 1-deoxy-D-xylulose 5-phosphate. Position 200 (glutamate 200) interacts with Mn(2+).

The protein belongs to the DXR family. Mg(2+) serves as cofactor. Requires Mn(2+) as cofactor.

The catalysed reaction is 2-C-methyl-D-erythritol 4-phosphate + NADP(+) = 1-deoxy-D-xylulose 5-phosphate + NADPH + H(+). It participates in isoprenoid biosynthesis; isopentenyl diphosphate biosynthesis via DXP pathway; isopentenyl diphosphate from 1-deoxy-D-xylulose 5-phosphate: step 1/6. Functionally, catalyzes the NADPH-dependent rearrangement and reduction of 1-deoxy-D-xylulose-5-phosphate (DXP) to 2-C-methyl-D-erythritol 4-phosphate (MEP). The protein is 1-deoxy-D-xylulose 5-phosphate reductoisomerase of Campylobacter jejuni subsp. jejuni serotype O:23/36 (strain 81-176).